We begin with the raw amino-acid sequence, 340 residues long: Phosphoribosylformylglycinamidine cyclo-ligase (340 aa).

The protein belongs to the AIR synthase family.

Its subcellular location is the cytoplasm. It carries out the reaction 2-formamido-N(1)-(5-O-phospho-beta-D-ribosyl)acetamidine + ATP = 5-amino-1-(5-phospho-beta-D-ribosyl)imidazole + ADP + phosphate + H(+). It participates in purine metabolism; IMP biosynthesis via de novo pathway; 5-amino-1-(5-phospho-D-ribosyl)imidazole from N(2)-formyl-N(1)-(5-phospho-D-ribosyl)glycinamide: step 2/2. The chain is Phosphoribosylformylglycinamidine cyclo-ligase from Streptococcus pyogenes serotype M12 (strain MGAS2096).